Reading from the N-terminus, the 361-residue chain is Phospho-N-acetylmuramoyl-pentapeptide-transferase (361 aa).

Helical transmembrane passes span 25 to 45 (RAVM…PWVI), 73 to 93 (TMGG…WADL), 97 to 117 (YVWL…YDDW), 132 to 152 (FKMA…IATA), 167 to 187 (TVAY…VIVG), 200 to 220 (GLAA…AYVA), 240 to 260 (VVVF…FNAY), 264 to 284 (VFMG…VAVI), 289 to 309 (IVLF…MIQV), and 338 to 358 (QVVV…LSTL).

This sequence belongs to the glycosyltransferase 4 family. MraY subfamily. The cofactor is Mg(2+).

The protein resides in the cell inner membrane. It catalyses the reaction UDP-N-acetyl-alpha-D-muramoyl-L-alanyl-gamma-D-glutamyl-meso-2,6-diaminopimeloyl-D-alanyl-D-alanine + di-trans,octa-cis-undecaprenyl phosphate = di-trans,octa-cis-undecaprenyl diphospho-N-acetyl-alpha-D-muramoyl-L-alanyl-D-glutamyl-meso-2,6-diaminopimeloyl-D-alanyl-D-alanine + UMP. The protein operates within cell wall biogenesis; peptidoglycan biosynthesis. Its function is as follows. Catalyzes the initial step of the lipid cycle reactions in the biosynthesis of the cell wall peptidoglycan: transfers peptidoglycan precursor phospho-MurNAc-pentapeptide from UDP-MurNAc-pentapeptide onto the lipid carrier undecaprenyl phosphate, yielding undecaprenyl-pyrophosphoryl-MurNAc-pentapeptide, known as lipid I. This is Phospho-N-acetylmuramoyl-pentapeptide-transferase from Chromobacterium violaceum (strain ATCC 12472 / DSM 30191 / JCM 1249 / CCUG 213 / NBRC 12614 / NCIMB 9131 / NCTC 9757 / MK).